The primary structure comprises 209 residues: Probable E3 ubiquitin-protein ligase NleG7 (209 aa).

Belongs to the NleG E3 ligase family. In terms of processing, two sizes of protein are detected in situ; only the smaller protein is secreted.

It is found in the secreted. The protein resides in the host cytoplasm. It catalyses the reaction S-ubiquitinyl-[E2 ubiquitin-conjugating enzyme]-L-cysteine + [acceptor protein]-L-lysine = [E2 ubiquitin-conjugating enzyme]-L-cysteine + N(6)-ubiquitinyl-[acceptor protein]-L-lysine.. Effector proteins function to alter host cell physiology and promote bacterial survival in host tissues. This protein is probably an E3 ubiquitin-protein ligase that interferes with the host's ubiquitination pathway and targets host proteins for proteasomal degradation. Mice infected with a strain of bacteria deleted for this gene were colonized less quickly by bacteria. This is Probable E3 ubiquitin-protein ligase NleG7 from Citrobacter rodentium.